The primary structure comprises 487 residues: Bifunctional protein GlmU (487 aa).

A pyrophosphorylase region spans residues 1–235 (MSHSPTPLAA…PEEASGVNDR (235 aa)). UDP-N-acetyl-alpha-D-glucosamine contacts are provided by residues 13 to 16 (LAAG), K27, Q82, 87 to 88 (GT), 110 to 112 (SGD), G147, E162, N177, and N233. D112 contributes to the Mg(2+) binding site. N233 lines the Mg(2+) pocket. The segment at 236–256 (EELARAGRVLLRRRASELMRS) is linker. The interval 257–487 (GVTIEDPERF…ADSPRGGRAS (231 aa)) is N-acetyltransferase. 2 residues coordinate UDP-N-acetyl-alpha-D-glucosamine: R339 and K357. Residue H369 is the Proton acceptor of the active site. Residues Y372 and N383 each coordinate UDP-N-acetyl-alpha-D-glucosamine. Acetyl-CoA is bound by residues A386, 392–393 (NY), S411, A429, and R446. The interval 453-487 (EGWVARRKAEAQNKGAAEAAPAPSPADSPRGGRAS) is disordered. The span at 468 to 481 (AAEAAPAPSPADSP) shows a compositional bias: low complexity.

The protein in the N-terminal section; belongs to the N-acetylglucosamine-1-phosphate uridyltransferase family. This sequence in the C-terminal section; belongs to the transferase hexapeptide repeat family. Homotrimer. The cofactor is Mg(2+).

Its subcellular location is the cytoplasm. The catalysed reaction is alpha-D-glucosamine 1-phosphate + acetyl-CoA = N-acetyl-alpha-D-glucosamine 1-phosphate + CoA + H(+). The enzyme catalyses N-acetyl-alpha-D-glucosamine 1-phosphate + UTP + H(+) = UDP-N-acetyl-alpha-D-glucosamine + diphosphate. It functions in the pathway nucleotide-sugar biosynthesis; UDP-N-acetyl-alpha-D-glucosamine biosynthesis; N-acetyl-alpha-D-glucosamine 1-phosphate from alpha-D-glucosamine 6-phosphate (route II): step 2/2. The protein operates within nucleotide-sugar biosynthesis; UDP-N-acetyl-alpha-D-glucosamine biosynthesis; UDP-N-acetyl-alpha-D-glucosamine from N-acetyl-alpha-D-glucosamine 1-phosphate: step 1/1. It participates in bacterial outer membrane biogenesis; LPS lipid A biosynthesis. Catalyzes the last two sequential reactions in the de novo biosynthetic pathway for UDP-N-acetylglucosamine (UDP-GlcNAc). The C-terminal domain catalyzes the transfer of acetyl group from acetyl coenzyme A to glucosamine-1-phosphate (GlcN-1-P) to produce N-acetylglucosamine-1-phosphate (GlcNAc-1-P), which is converted into UDP-GlcNAc by the transfer of uridine 5-monophosphate (from uridine 5-triphosphate), a reaction catalyzed by the N-terminal domain. This is Bifunctional protein GlmU from Anaeromyxobacter sp. (strain Fw109-5).